We begin with the raw amino-acid sequence, 726 residues long: Catalase-peroxidase (726 aa).

Residues 1–33 (MSTTDDTHNTLSAGKCPFHQGGHDRSAGAGTAS) are disordered. A cross-link (tryptophyl-tyrosyl-methioninium (Trp-Tyr) (with M-252)) is located at residues 105–226 (WHGAGTYRSI…LGATEMGLIY (122 aa)). Catalysis depends on His106, which acts as the Proton acceptor. The segment at residues 226 to 252 (YVNPEGPDHSGEPLSAAAAIRATFGNM) is a cross-link (tryptophyl-tyrosyl-methioninium (Tyr-Met) (with W-105)). Position 267 (His267) interacts with heme b.

This sequence belongs to the peroxidase family. Peroxidase/catalase subfamily. In terms of assembly, homodimer or homotetramer. It depends on heme b as a cofactor. In terms of processing, formation of the three residue Trp-Tyr-Met cross-link is important for the catalase, but not the peroxidase activity of the enzyme.

It carries out the reaction H2O2 + AH2 = A + 2 H2O. The catalysed reaction is 2 H2O2 = O2 + 2 H2O. Bifunctional enzyme with both catalase and broad-spectrum peroxidase activity. The polypeptide is Catalase-peroxidase (Salmonella arizonae (strain ATCC BAA-731 / CDC346-86 / RSK2980)).